A 302-amino-acid polypeptide reads, in one-letter code: Rab effector Noc2 (302 aa).

A RabBD domain is found at 41–158 (QRRSQCLSPG…KRSGAWFYKG (118 aa)). The FYVE-type zinc-finger motif lies at 89 to 146 (GNGLSQCLLCGEVLGFLGSSSVFCKDCRKKVCTKCGIEASPGQKRPLWLCKICSEQRE). 8 residues coordinate Zn(2+): cysteine 95, cysteine 98, cysteine 112, cysteine 115, cysteine 120, cysteine 123, cysteine 138, and cysteine 141. The interval 174 to 302 (DPHFRPLPVE…KRHTWATPRY (129 aa)) is disordered. Residues 185-197 (TETQPPSAETSRV) show a composition bias toward polar residues. Serine 248 bears the Phosphoserine mark. Over residues 258 to 269 (SHLSGSQSSLGS) the composition is skewed to low complexity.

In terms of assembly, recruited to dense-core vesicles through specific interaction with RAB27A in endocrine cells. Interacts with RAB3A, RAB3B, RAB3C and RAB3D. Interacts with ZYX. As to expression, highly expressed in pancreatic islets. High to moderate expression in adrenal gland, pituitary gland and ovary.

It localises to the cytoplasm. It is found in the cytoplasmic vesicle. The protein localises to the secretory vesicle membrane. In terms of biological role, rab GTPase effector involved in the late steps of regulated exocytosis, both in endocrine and exocrine cells. Regulates the exocytosis of dense-core vesicles in neuroendocrine cells through interaction with RAB27A. Acts as a potential RAB3B effector protein in epithelial cells. This chain is Rab effector Noc2 (Rph3al), found in Mus musculus (Mouse).